The sequence spans 152 residues: Pleckstrin homology-like domain family A member 2 (152 aa).

Phosphoserine is present on residues Ser-3 and Ser-42. In terms of domain architecture, PH spans 7–99 (VLREGELEKR…WNAAIALALI (93 aa)). Positions 112–152 (SRQERTAPAAPAEDAVAAAAAAPSEPSEPSRPSPQPKPRTP) are disordered. Residues 118-138 (APAAPAEDAVAAAAAAPSEPS) show a composition bias toward low complexity. Residues 140–152 (PSRPSPQPKPRTP) are compositionally biased toward pro residues. Phosphoserine is present on residues Ser-141 and Ser-144. A Phosphothreonine modification is found at Thr-151.

The protein belongs to the PHLDA2 family. As to expression, expressed in placenta and adult prostate gland. In placenta, it is present in all cells of the villous cytotrophoblast. The protein is absent in cells from hydatidiform moles. Hydatidiform mole is a gestation characterized by abnormal development of both fetus and trophoblast. The majority of hydatidiform moles are associated with an excess of paternal to maternal genomes and are likely to result from the abnormal expression of imprinted genes (at protein level). Expressed at low levels in adult liver and lung, and fetal liver. Expressed in adult brain and neuroblastoma, medullablastoma and glioblastoma cell lines.

It localises to the cytoplasm. The protein resides in the membrane. Plays a role in regulating placenta growth. May act via its PH domain that competes with other PH domain-containing proteins, thereby preventing their binding to membrane lipids. This chain is Pleckstrin homology-like domain family A member 2 (PHLDA2), found in Homo sapiens (Human).